Reading from the N-terminus, the 213-residue chain is ATP phosphoribosyltransferase (213 aa).

This sequence belongs to the ATP phosphoribosyltransferase family. Short subfamily. As to quaternary structure, heteromultimer composed of HisG and HisZ subunits.

It is found in the cytoplasm. It carries out the reaction 1-(5-phospho-beta-D-ribosyl)-ATP + diphosphate = 5-phospho-alpha-D-ribose 1-diphosphate + ATP. Its pathway is amino-acid biosynthesis; L-histidine biosynthesis; L-histidine from 5-phospho-alpha-D-ribose 1-diphosphate: step 1/9. Functionally, catalyzes the condensation of ATP and 5-phosphoribose 1-diphosphate to form N'-(5'-phosphoribosyl)-ATP (PR-ATP). Has a crucial role in the pathway because the rate of histidine biosynthesis seems to be controlled primarily by regulation of HisG enzymatic activity. This Listeria welshimeri serovar 6b (strain ATCC 35897 / DSM 20650 / CCUG 15529 / CIP 8149 / NCTC 11857 / SLCC 5334 / V8) protein is ATP phosphoribosyltransferase.